A 131-amino-acid chain; its full sequence is MDPRLPAWALVLLGPALVFALGPAPTPEMREKLCGHHFVRALVRVCGGPLWSTEARRPVAAGDGELLQWLERRHLLYGLVANSEPAPGGPGLQPMPQTSHHHRHRRAAASNPARYCCLSGCSQQDLLTLCP.

The first 24 residues, 1 to 24 (MDPRLPAWALVLLGPALVFALGPA), serve as a signal peptide directing secretion. Cystine bridges form between cysteine 34/cysteine 117, cysteine 46/cysteine 130, and cysteine 116/cysteine 121. Positions 58 to 104 (PVAAGDGELLQWLERRHLLYGLVANSEPAPGGPGLQPMPQTSHHHRH) are cleaved as a propeptide — c peptide like. The disordered stretch occupies residues 86–105 (APGGPGLQPMPQTSHHHRHR).

It belongs to the insulin family. Heterodimer of a B chain and an A chain linked by two disulfide bonds. In terms of tissue distribution, highest expression in the Leydig cells of the testis.

The protein localises to the secreted. In terms of biological role, seems to play a role in testicular function. May be a trophic hormone with a role in testicular descent in fetal life. Is a ligand for LGR8 receptor. This chain is Insulin-like 3 (INSL3), found in Callithrix jacchus (White-tufted-ear marmoset).